We begin with the raw amino-acid sequence, 443 residues long: MALRLGRLGSDPWWRAVLGDYAQLRAASPRCASARVCQLPGTAGPQPRRGLGYGPWARGGSGLGTRLAATLAGLAGLAAAAFGHVQRAEMVPKSSGARSPSPGRREEDGDELARRCSTFMSSPVTELRELRRRPEDMKTKMELMIMETQAQVCRALAQVDGVADFTVDRWERKEGGGGITCVLQDGRVFEKAGVSISVVHGNLSEEAANQMRGRGKTLKTKDSKLPFTAMGVSSVIHPKNPYAPTMHFNYRYFEVEEADGNTHWWFGGGCDLTPTYLNQEDAVHFHRTLKEACDQHGPDIYPKFKKWCDDYFFIVHRGERRGIGGIFFDDLDSPSKEEAFRFVKTCAEAVVPSYVPIVKKHCDDSYTPRDKLWQQLRRGRYVEFNLLYDRGTKFGLFTPGSRIESILMSLPLTARWEYMHSPPENSKEAEILEVLRHPKDWVH.

A mitochondrion-targeting transit peptide spans 1-98 (MALRLGRLGS…EMVPKSSGAR (98 aa)). The disordered stretch occupies residues 89 to 112 (EMVPKSSGARSPSPGRREEDGDEL). Position 101 is a phosphoserine (serine 101). Basic and acidic residues predominate over residues 103–112 (GRREEDGDEL). The tract at residues 182-191 (VLQDGRVFEK) is important for dimerization. Serine 233 contacts coproporphyrinogen III. The active-site Proton donor is the histidine 247. 249–251 (NYR) serves as a coordination point for coproporphyrinogen III. The interval 381–417 (YVEFNLLYDRGTKFGLFTPGSRIESILMSLPLTARWE) is important for dimerization. Lysine 393 carries the post-translational modification N6-acetyllysine; alternate. Residue lysine 393 is modified to N6-succinyllysine; alternate. Residue 400–402 (GSR) participates in coproporphyrinogen III binding.

The protein belongs to the aerobic coproporphyrinogen-III oxidase family. As to quaternary structure, homodimer. As to expression, expressed in erythroid cells. Expressed in liver.

It is found in the mitochondrion intermembrane space. The catalysed reaction is coproporphyrinogen III + O2 + 2 H(+) = protoporphyrinogen IX + 2 CO2 + 2 H2O. The protein operates within porphyrin-containing compound metabolism; protoporphyrin-IX biosynthesis; protoporphyrinogen-IX from coproporphyrinogen-III (O2 route): step 1/1. In terms of biological role, involved in the heme biosynthesis. Catalyzes the aerobic oxidative decarboxylation of propionate groups of rings A and B of coproporphyrinogen-III to yield the vinyl groups in protoporphyrinogen-IX. This chain is Oxygen-dependent coproporphyrinogen-III oxidase, mitochondrial (Cpox), found in Mus musculus (Mouse).